The primary structure comprises 507 residues: MSTTAYPDTILIIDFGSQVTQLIARRVREANVYCEIVPFQSADEAFKRLQPKGVILSGSPHSTTDIGSPRAPQAIFDAGIPVLGICYGEQTMCAQLGGNVESGHDREFGRAFLDVQEDSPLFAGIWAKGTRHQVWMSHGDRVTSLPDGFTIIGTSPNAPYAVIADEKRKYYGVQFHPEVVHTPDGAKLLQNFVHRIVGVKPGWTMGAYREQAVEAIRKQVGSGKVICALSGGVDSSVAALLAHEAVGDQLTCILVDHGLMRKDEVQQVVEMFREHYNLPLILVDASDRFIGALEGESDPEKKRKTIGRLFIEVFEEEARKLGGADFLVQGTLYPDVIESVSFTGGPSVTIKSHHNVGGLPERMKMQLVEPLRELFKDEVRLLGKELGLPDSFIGRHPFPGPGLAIRCPGGVTREKLEILREADAIYLDEIRKAGLYDAIWQAFAVLLPVQDRGRDGGWPHLRIRLRLARGDFGGRHDGGFLPLRHEFPRQCGHPHHQRSPRHQPRCL.

Positions 9–202 (TILIIDFGSQ…VHRIVGVKPG (194 aa)) constitute a Glutamine amidotransferase type-1 domain. Cysteine 86 serves as the catalytic Nucleophile. Residues histidine 176 and glutamate 178 contribute to the active site. The GMPS ATP-PPase domain maps to 203 to 395 (WTMGAYREQA…LGLPDSFIGR (193 aa)). 230–236 (SGGVDSS) is an ATP binding site.

As to quaternary structure, homodimer.

It carries out the reaction XMP + L-glutamine + ATP + H2O = GMP + L-glutamate + AMP + diphosphate + 2 H(+). It functions in the pathway purine metabolism; GMP biosynthesis; GMP from XMP (L-Gln route): step 1/1. Functionally, catalyzes the synthesis of GMP from XMP. This Brucella melitensis biotype 1 (strain ATCC 23456 / CCUG 17765 / NCTC 10094 / 16M) protein is GMP synthase [glutamine-hydrolyzing].